Reading from the N-terminus, the 149-residue chain is Small ribosomal subunit protein bS6 (149 aa).

Positions 94–149 (EKHEEGPSAMMQKRDRDDRPRRDGDRPDRGGFGDRGPRPDRGDRDDRPRRPREDRA) are disordered.

This sequence belongs to the bacterial ribosomal protein bS6 family.

In terms of biological role, binds together with bS18 to 16S ribosomal RNA. The polypeptide is Small ribosomal subunit protein bS6 (Sinorhizobium fredii (strain NBRC 101917 / NGR234)).